Consider the following 301-residue polypeptide: Protoheme IX farnesyltransferase 2 (301 aa).

Transmembrane regions (helical) follow at residues 29 to 49, 51 to 71, 101 to 121, 123 to 143, 150 to 170, 177 to 197, 223 to 243, 244 to 264, and 281 to 301; these read VVALMLLTVLVGMCLAVPTAV, VQPLIAGMFGIALMAGSAAAL, ALIFAASIGGLGFVVLYVLVN, LTAWLTFASLIGYALVYTAYL, NIVIGGLAGAMPPLLGWTAVT, ALLLVIIIFTWTPPHFWALAI, CILLYTVLLAIACLLPVLVGM, CGPMYFVCSSLLSSVFIYKAW, and FSIYHLMLLFMALLIDHYLWS.

It belongs to the UbiA prenyltransferase family. Protoheme IX farnesyltransferase subfamily.

Its subcellular location is the cell inner membrane. The catalysed reaction is heme b + (2E,6E)-farnesyl diphosphate + H2O = Fe(II)-heme o + diphosphate. It participates in porphyrin-containing compound metabolism; heme O biosynthesis; heme O from protoheme: step 1/1. Its function is as follows. Converts heme B (protoheme IX) to heme O by substitution of the vinyl group on carbon 2 of heme B porphyrin ring with a hydroxyethyl farnesyl side group. The protein is Protoheme IX farnesyltransferase 2 of Shewanella sp. (strain W3-18-1).